Consider the following 484-residue polypeptide: Tubulin-like protein TubZ (484 aa).

Position 32–33 (glutamine 32–lysine 33) interacts with GTP. Aspartate 64 is a Mg(2+) binding site. Residues glycine 140–glycine 142, asparagine 213, lysine 237, and asparagine 241 each bind GTP. The segment at arginine 408–arginine 484 is required to bind TubR-DNA complex. Residues threonine 428–arginine 484 form a disordered region. Polar residues predominate over residues phenylalanine 452–arginine 484.

The protein belongs to the FtsZ family. TubZ subfamily. In terms of assembly, forms filaments; a 2-stranded filament forms with the non-hydrolyzable GTP-gamma-S which is probably a precursor to the 4-stranded filament that forms in the presence of GTP. The 4-stranded form binds GDP. In vivo polymerizes to form dynamic filaments that often extend from one cell pole to the other, moving in a unidirectional manner. Filaments polymerize at the plus end and depolymerize at the minus end, a process called treadmilling. Polymerization only occurs above a critical concentration, it does not require upstream tubR. The tubC DNA-TubR complex binds to TubZ. It depends on Mg(2+) as a cofactor.

The protein resides in the cytoplasm. It carries out the reaction GTP + H2O = GDP + phosphate + H(+). Its activity is regulated as follows. GTPase is inhibited by GTP-gamma-S, which also stabilizes filaments. In terms of biological role, a tubulin-like, filament forming GTPase; the motor component of the type III plasmid partition system which ensures correct segregation of the pBtoxis plasmid. Filaments may seed from the centromere-like site (tubC) when bound by DNA-binding protein TubR; the tubC-TubR complex stabilizes the TubZ filament. Filaments grow at the plus end and depolymerize at the minus end, a process called treadmilling. TubR-tubC complexes track the depolymerizing minus end of the filament, probably pulling plasmid within the cell. Required for pBtoxis plasmid replication/partition. Binds the TubR-tubC complex; GTP is not required for binding to TubR-tubC. TubZ alone does not bind DNA. Has a high GTPase activity in the presence of Mg(2+); in the presence of GTP assembles into dynamic filaments which upon polymerization bind almost exclusively GDP. Filament formation is cooperative, requiring a critical concentration. Formation occurs very quickly and is followed by disassembly as GTP is consumed. The polypeptide is Tubulin-like protein TubZ (Bacillus thuringiensis subsp. israelensis).